We begin with the raw amino-acid sequence, 412 residues long: Putative competence-damage inducible protein (412 aa).

Belongs to the CinA family.

In Caldanaerobacter subterraneus subsp. tengcongensis (strain DSM 15242 / JCM 11007 / NBRC 100824 / MB4) (Thermoanaerobacter tengcongensis), this protein is Putative competence-damage inducible protein.